Consider the following 318-residue polypeptide: Putative fimbrium tip subunit Fim1F (318 aa).

A signal peptide spans 1–24 (MRFNVVLFMLIVALLGGLSTCSSE). Residues 25–50 (VPIGFDTDELSFDMSLVLLTGDMQTK) constitute a propeptide that is removed on maturation.

It belongs to the bacteroidetes fimbrillin superfamily. FimA/Mfa1 family. May be part of the fimbrial tip.

Its subcellular location is the fimbrium. In terms of biological role, putative component of the fimbrium tip. Fimbriae are filamentous appendages on the cell surface that mediate cell adhesion and biofilm formation. This is Putative fimbrium tip subunit Fim1F from Parabacteroides distasonis (strain ATCC 8503 / DSM 20701 / CIP 104284 / JCM 5825 / NCTC 11152).